Here is a 101-residue protein sequence, read N- to C-terminus: Urease subunit beta (101 aa).

This sequence belongs to the urease beta subunit family. As to quaternary structure, heterotrimer of UreA (gamma), UreB (beta) and UreC (alpha) subunits. Three heterotrimers associate to form the active enzyme.

It is found in the cytoplasm. It carries out the reaction urea + 2 H2O + H(+) = hydrogencarbonate + 2 NH4(+). It participates in nitrogen metabolism; urea degradation; CO(2) and NH(3) from urea (urease route): step 1/1. This is Urease subunit beta from Rhizobium meliloti (strain 1021) (Ensifer meliloti).